Consider the following 66-residue polypeptide: MAKGKDIRITVILECTSCDKKSVNKESRGISRYITQKNRHNTPSRLELRKFCPFCCKHTIHAEIKK.

The protein belongs to the bacterial ribosomal protein bL33 family.

The protein localises to the plastid. Its subcellular location is the chloroplast. The chain is Large ribosomal subunit protein bL33c from Cicer arietinum (Chickpea).